The sequence spans 100 residues: Urease subunit gamma (100 aa).

Belongs to the urease gamma subunit family. As to quaternary structure, heterotrimer of UreA (gamma), UreB (beta) and UreC (alpha) subunits. Three heterotrimers associate to form the active enzyme.

It localises to the cytoplasm. The catalysed reaction is urea + 2 H2O + H(+) = hydrogencarbonate + 2 NH4(+). It functions in the pathway nitrogen metabolism; urea degradation; CO(2) and NH(3) from urea (urease route): step 1/1. This Burkholderia ambifaria (strain MC40-6) protein is Urease subunit gamma.